We begin with the raw amino-acid sequence, 293 residues long: Protease HtpX (293 aa).

2 consecutive transmembrane segments (helical) span residues 4–24 (ISLF…VLSL) and 33–53 (AGLM…SLLM). A Zn(2+)-binding site is contributed by His139. The active site involves Glu140. His143 contacts Zn(2+). 2 consecutive transmembrane segments (helical) span residues 158–178 (VVNT…AGFM) and 193–213 (LVYF…ASII). Glu222 contributes to the Zn(2+) binding site.

This sequence belongs to the peptidase M48B family. Zn(2+) is required as a cofactor.

It is found in the cell inner membrane. The chain is Protease HtpX from Sodalis glossinidius (strain morsitans).